The primary structure comprises 142 residues: Peptide methionine sulfoxide reductase MsrB (142 aa).

Residues 2–125 (IKKDKNELNE…NSAAIQFIPY (124 aa)) enclose the MsrB domain. Cys-114 acts as the Nucleophile in catalysis.

Belongs to the MsrB Met sulfoxide reductase family.

The enzyme catalyses L-methionyl-[protein] + [thioredoxin]-disulfide + H2O = L-methionyl-(R)-S-oxide-[protein] + [thioredoxin]-dithiol. In Staphylococcus haemolyticus (strain JCSC1435), this protein is Peptide methionine sulfoxide reductase MsrB.